A 343-amino-acid polypeptide reads, in one-letter code: KRR1 small subunit processome component homolog (343 aa).

The KH domain maps to 125–193 (DIIKIGNLVH…VRDIVVETMN (69 aa)). Residues 232–245 (NISKRKQPKVKKAK) show a composition bias toward basic residues. The disordered stretch occupies residues 232-343 (NISKRKQPKV…KLLKANKKKV (112 aa)). Residues 270–302 (FLNKEQKQAKRQQERSAKQADAAKRQDERRNKD) adopt a coiled-coil conformation. Residues 271-302 (LNKEQKQAKRQQERSAKQADAAKRQDERRNKD) show a composition bias toward basic and acidic residues. The span at 331 to 343 (LKAKLLKANKKKV) shows a compositional bias: basic residues.

It belongs to the KRR1 family. In terms of assembly, monomer. Component of the ribosomal small subunit (SSU) processome.

The protein resides in the nucleus. It localises to the nucleolus. Its function is as follows. Required for 40S ribosome biogenesis. Involved in nucleolar processing of pre-18S ribosomal RNA and ribosome assembly. Binds to RNA. Required for female germline development, cell viability during eye development and for survival of dividing cells and epithelial cells during early wing disk development. The polypeptide is KRR1 small subunit processome component homolog (Drosophila ananassae (Fruit fly)).